Reading from the N-terminus, the 275-residue chain is Diaminopimelate epimerase (275 aa).

Substrate-binding residues include Asn-12, Gln-45, and Asn-65. The active-site Proton donor is the Cys-74. Substrate is bound by residues 75-76 (GN), Asn-158, Asn-191, and 209-210 (ER). The Proton acceptor role is filled by Cys-218. 219–220 (GT) is a substrate binding site.

Belongs to the diaminopimelate epimerase family. In terms of assembly, homodimer.

The protein resides in the cytoplasm. The enzyme catalyses (2S,6S)-2,6-diaminopimelate = meso-2,6-diaminopimelate. Its pathway is amino-acid biosynthesis; L-lysine biosynthesis via DAP pathway; DL-2,6-diaminopimelate from LL-2,6-diaminopimelate: step 1/1. Functionally, catalyzes the stereoinversion of LL-2,6-diaminopimelate (L,L-DAP) to meso-diaminopimelate (meso-DAP), a precursor of L-lysine and an essential component of the bacterial peptidoglycan. The polypeptide is Diaminopimelate epimerase (Shewanella oneidensis (strain ATCC 700550 / JCM 31522 / CIP 106686 / LMG 19005 / NCIMB 14063 / MR-1)).